A 49-amino-acid chain; its full sequence is Large ribosomal subunit protein bL33B (49 aa).

It belongs to the bacterial ribosomal protein bL33 family.

This is Large ribosomal subunit protein bL33B from Staphylococcus saprophyticus subsp. saprophyticus (strain ATCC 15305 / DSM 20229 / NCIMB 8711 / NCTC 7292 / S-41).